A 500-amino-acid chain; its full sequence is Raftlin-2 (500 aa).

The N-myristoyl glycine moiety is linked to residue G2. The S-palmitoyl cysteine moiety is linked to residue C3. Positions 203–236 (GHLSESGVEEEPQHESGQHQTERNSSPSYANPKR) are disordered. A compositionally biased stretch (basic and acidic residues) spans 213 to 224 (EPQHESGQHQTE). A Phosphoserine modification is found at S404. The disordered stretch occupies residues 406–500 (AQTPERKGSR…EEGVTQVTCM (95 aa)). T408 carries the post-translational modification Phosphothreonine. The span at 409-424 (PERKGSRLLKGEDRNK) shows a compositional bias: basic and acidic residues. The segment covering 426–438 (SSRSLGLDTNASQ) has biased composition (polar residues). The residue at position 429 (S429) is a Phosphoserine. The segment covering 467 to 478 (SDSFSGFSSSDS) has biased composition (low complexity).

It belongs to the raftlin family. In terms of tissue distribution, expressed in B-cells, heart, brain, spleen, large intestine and lung. Expressed in dendritic cells and macrophages.

The protein resides in the cell membrane. Functionally, upon bacterial lipopolysaccharide stimulation, mediates clathrin-dependent internalization of TLR4 in dendritic cells, resulting in activation of TICAM1-mediated signaling and subsequent IFNB1 production. May regulate B-cell antigen receptor-mediated signaling. This chain is Raftlin-2 (Rftn2), found in Mus musculus (Mouse).